Consider the following 114-residue polypeptide: uncharacterized protein (114 aa).

Residues 13–99 enclose the ABM domain; the sequence is YYAVIFSSVK…VWYESYAVRV (87 aa).

This is an uncharacterized protein from Bacillus subtilis (strain 168).